The chain runs to 324 residues: bZIP transcription factor 46 (324 aa).

The disordered stretch occupies residues 106–127 (LGGSDDEDPAAAAAAAAPAQRQ). Positions 115–124 (AAAAAAAAPA) are enriched in low complexity. Residues 242-287 (VERRQRRMIKNRESAARSRARKQAYIMELEAEVAKLKEQKAELQKK) enclose the bZIP domain. The basic motif stretch occupies residues 244-263 (RRQRRMIKNRESAARSRARK). The interval 270–284 (LEAEVAKLKEQKAEL) is leucine-zipper.

Interacts with MODD. Interacts with SAPK2, SAPK6 and SAPK9. Post-translationally, phosphorylated on serine and threonine residues by SAPK2, SAPK6 and SAPK9. Phosphorylation is required for full transactivation activity. Expressed in roots, shoots, leaves, flag leaves, stems, flowers and panicles. Widely expressed.

The protein localises to the nucleus. Functionally, transcription factor involved in abscisic acid (ABA) signaling pathway. Transcription factor activity is fully activated by ABA. Acts as a positive regulator of the expression of abiotic stress-responsive genes through an ABA-dependent signaling pathway. Acts as a positive regulator of ABA signaling and drought stress tolerance. Plays an important role in ABA and auxin responses. Involved in ABA signaling and stress responses by directly binding to the ABA-responsive element (ABRE)-containing genes, especially WRKY family genes. Modulates response to auxin. Suppresses auxin signaling by targeting ABRE-containing genes related to auxin metabolism or signaling. The chain is bZIP transcription factor 46 from Oryza sativa subsp. japonica (Rice).